The primary structure comprises 149 residues: 3-dehydroquinate dehydratase (149 aa).

Catalysis depends on Y21, which acts as the Proton acceptor. Substrate contacts are provided by N73, H79, and D86. Residue H99 is the Proton donor of the active site. Substrate contacts are provided by residues 100–101 (LT) and R110.

This sequence belongs to the type-II 3-dehydroquinase family. In terms of assembly, homododecamer.

It catalyses the reaction 3-dehydroquinate = 3-dehydroshikimate + H2O. It functions in the pathway metabolic intermediate biosynthesis; chorismate biosynthesis; chorismate from D-erythrose 4-phosphate and phosphoenolpyruvate: step 3/7. Its function is as follows. Catalyzes a trans-dehydration via an enolate intermediate. The chain is 3-dehydroquinate dehydratase from Thermus thermophilus (strain ATCC BAA-163 / DSM 7039 / HB27).